A 473-amino-acid polypeptide reads, in one-letter code: Zinc finger and SCAN domain-containing protein 21 (473 aa).

Lysine 27 participates in a covalent cross-link: Glycyl lysine isopeptide (Lys-Gly) (interchain with G-Cter in SUMO2). Residues 45–127 (RQRFRQFGYH…TLLEDLEREL (83 aa)) form the SCAN box domain. The tract at residues 127 to 171 (LDEPGHQVSTPPNEQKPVWEKISSSGTAKESPSSMQPQPLETSHN) is disordered. The segment covering 148–171 (ISSSGTAKESPSSMQPQPLETSHN) has biased composition (polar residues). Residues lysine 221 and lysine 232 each participate in a glycyl lysine isopeptide (Lys-Gly) (interchain with G-Cter in SUMO2) cross-link. Positions 244 to 272 (LENEKGTKPPLQEAGSKKGRESVPTKPTP) are disordered. Basic and acidic residues predominate over residues 258–272 (GSKKGRESVPTKPTP). 7 C2H2-type zinc fingers span residues 277–299 (YICA…RRTH), 305–327 (YVCT…YRTH), 333–354 (YDCK…QRMH), 360–382 (YQCK…YRIH), 388–410 (YQCN…QRLH), 416–438 (YKCK…HRIH), and 444–466 (YWCH…QRVH). Lysine 349 participates in a covalent cross-link: Glycyl lysine isopeptide (Lys-Gly) (interchain with G-Cter in SUMO2).

The protein belongs to the krueppel C2H2-type zinc-finger protein family.

The protein resides in the nucleus. In terms of biological role, strong transcriptional activator. Plays an important role in spermatogenesis; essential for the progression of meiotic prophase I in spermatocytes. The chain is Zinc finger and SCAN domain-containing protein 21 (ZSCAN21) from Gorilla gorilla gorilla (Western lowland gorilla).